A 247-amino-acid chain; its full sequence is C-type lectin domain family 7 member A (247 aa).

Over 1–44 the chain is Cytoplasmic; that stretch reads MEYHPDLENLDEDGYTQLHFDSQSNTRIAVVSEKGSCAASPPWR. Positions 15-18 match the ITAM-like motif; it reads YTQL. Residues 45–65 form a helical; Signal-anchor for type II membrane protein membrane-spanning segment; the sequence is LIAVILGILCLVILVIAVVLG. The Extracellular segment spans residues 66-247; it reads TMAIWRSNSG…YSICEKKFSM (182 aa). An N-linked (GlcNAc...) asparagine glycan is attached at Asn-91. 3 cysteine pairs are disulfide-bonded: Cys-120–Cys-131, Cys-148–Cys-241, and Cys-220–Cys-233. A C-type lectin domain is found at 127–242; it reads YEKSCYLFSM…CSVPSYSICE (116 aa). 146–153 contributes to the (1,3-beta-D-glucosyl)n binding site; that stretch reads RQCWQLGS. 3 residues coordinate a divalent metal cation: Lys-157, Asp-159, and Glu-163. Glu-195 contacts (1,3-beta-D-glucosyl)n. Glu-242 contacts a divalent metal cation.

In terms of assembly, homodimer. Interacts with SYK; participates in leukocyte activation in presence of fungal pathogens. Interacts with CD37; this interaction controls CLEC7A-mediated IL-6 production. Interacts with RANBP9. Post-translationally, phosphorylated on tyrosine residues in response to beta-glucan binding. In terms of tissue distribution, highly expressed in peripheral blood leukocytes and dendritic cells. Detected in spleen, bone marrow, lung, muscle, stomach and placenta.

Its subcellular location is the cell membrane. It localises to the cytoplasm. Lectin that functions as a pattern recognizing receptor (PRR) specific for beta-1,3-linked and beta-1,6-linked glucans, which constitute cell wall constituents from pathogenic bacteria and fungi. Necessary for the TLR2-mediated inflammatory response and activation of NF-kappa-B: upon beta-glucan binding, recruits SYK via its ITAM motif and promotes a signaling cascade that activates some CARD domain-BCL10-MALT1 (CBM) signalosomes, leading to the activation of NF-kappa-B and MAP kinase p38 (MAPK11, MAPK12, MAPK13 and/or MAPK14) pathways which stimulate expression of genes encoding pro-inflammatory cytokines and chemokines. Enhances cytokine production in macrophages and dendritic cells. Mediates production of reactive oxygen species in the cell. Mediates phagocytosis of C.albicans conidia. Binds T-cells in a way that does not involve their surface glycans and plays a role in T-cell activation. Stimulates T-cell proliferation. Induces phosphorylation of SCIMP after binding beta-glucans. The protein is C-type lectin domain family 7 member A of Homo sapiens (Human).